A 179-amino-acid chain; its full sequence is Large ribosomal subunit protein uL6 (179 aa).

Belongs to the universal ribosomal protein uL6 family. Part of the 50S ribosomal subunit.

In terms of biological role, this protein binds to the 23S rRNA, and is important in its secondary structure. It is located near the subunit interface in the base of the L7/L12 stalk, and near the tRNA binding site of the peptidyltransferase center. In Synechococcus elongatus (strain ATCC 33912 / PCC 7942 / FACHB-805) (Anacystis nidulans R2), this protein is Large ribosomal subunit protein uL6.